Here is a 459-residue protein sequence, read N- to C-terminus: tRNA-2-methylthio-N(6)-dimethylallyladenosine synthase (459 aa).

Positions 1–116 (MRAHLITYGC…IGKALETNER (116 aa)) constitute an MTTase N-terminal domain. 6 residues coordinate [4Fe-4S] cluster: Cys-10, Cys-46, Cys-79, Cys-148, Cys-152, and Cys-155. Residues 134–367 (PQGKLQAHLT…IAKQKEWSAR (234 aa)) enclose the Radical SAM core domain. One can recognise a TRAM domain in the interval 370 to 433 (AAKVGTIQEV…PHMLYGRLIG (64 aa)).

This sequence belongs to the methylthiotransferase family. MiaB subfamily. Monomer. [4Fe-4S] cluster serves as cofactor.

The protein localises to the cytoplasm. It carries out the reaction N(6)-dimethylallyladenosine(37) in tRNA + (sulfur carrier)-SH + AH2 + 2 S-adenosyl-L-methionine = 2-methylsulfanyl-N(6)-dimethylallyladenosine(37) in tRNA + (sulfur carrier)-H + 5'-deoxyadenosine + L-methionine + A + S-adenosyl-L-homocysteine + 2 H(+). Catalyzes the methylthiolation of N6-(dimethylallyl)adenosine (i(6)A), leading to the formation of 2-methylthio-N6-(dimethylallyl)adenosine (ms(2)i(6)A) at position 37 in tRNAs that read codons beginning with uridine. The polypeptide is tRNA-2-methylthio-N(6)-dimethylallyladenosine synthase (Deinococcus geothermalis (strain DSM 11300 / CIP 105573 / AG-3a)).